The following is an 840-amino-acid chain: MAEKISPGMQQYLDIKQDYPDAFLLFRMGDFYELFYEDAVNAAQILELTLTSRNKNSENPIPMAGVPHHAATEYIDKLVDLGYKVAVAEQMEDPKKAVGIVKRAVTQVITPGTTIDTANSVDNNFLVAIDFKAKRYALSYMDLSTGEFKVTELSEFSAVVGEIASLKAREIVVGFPLDEAQVKVFERQMNLLISEQFEIPENLLIELSGLTALENQAASKLLAYVKETQMRDLSHLQEVEHYEIKDFLQMDFATKSSLELTANKRENKKHGTLYWLLDETKTAMGTRMLRSWIDRPLVSNSAIQKRMEIVQVFLDHFFERSDLIEALKGVYDLERLASRVSFGKAVPVDFLQLANSLSNVPAIKNILEVLDEMPLNELRSQLDEIPELSGLINSAISENASRTITEGGIIKKGYNVQLDKYREALENGTSWIAKLEADEKAKTGISTLRIDYNRKDGYYFHITQSQLNSVPEHFYRKATLKNSERFGSQELTEIEEIMLEAREKSSSLEYDLFMGLRAETEQYIGRLQALAKTIAEIDCLQSLSVVAEKQGYIRPTLTEGSRIVEIKGGRHAVVEAVMGAQEYVPNDIELPEQTDIQLITGPNMSGKSTYMRQFALTVIMAQIGSFVPAETANLPIFDAIFTRIGASDNLISGESTFMVEMSEANHAIQKATSRSLIIFDELGRGTATYDGMALAQAIIEYVHEHIGAKTLFATHYHELTDLDKELDHLDNVHVATLEQNGNVTFLHKITDGPADKSYGIHVAKIAGLPQTLLERADLILQKLENKPLPAKKVADEQEQLSLFDFAENSSEIIEKIKGQNVDNMTAREALNFLWELKDSL.

Residue Gly-601–Ser-608 participates in ATP binding.

It belongs to the DNA mismatch repair MutS family.

Its function is as follows. This protein is involved in the repair of mismatches in DNA. It is possible that it carries out the mismatch recognition step. This protein has a weak ATPase activity. This is DNA mismatch repair protein MutS from Lactococcus lactis subsp. cremoris (strain MG1363).